The following is a 519-amino-acid chain: Dideacetyl fusicoccin A C-19 hydroxylase (519 aa).

The helical transmembrane segment at leucine 16–serine 36 threads the bilayer. N-linked (GlcNAc...) asparagine glycans are attached at residues asparagine 177, asparagine 327, asparagine 414, and asparagine 432. Position 454 (cysteine 454) interacts with heme.

Belongs to the cytochrome P450 family. Requires heme as cofactor.

It is found in the membrane. It functions in the pathway mycotoxin biosynthesis. Its function is as follows. Cytochrome P450 monooxygenase; part of the 2 gene clusters that mediate the biosynthesis of fusicoccins, diterpene glucosides that display phytohormone-like activity and function as potent activators of plasma membrane H(+)-ATPases in plants by modifying 14-3-3 proteins and cause the plant disease constriction canker. The first step in the pathway is performed by the fusicoccadiene synthase PaFS that possesses both prenyl transferase and terpene cyclase activity, converting isopentenyl diphosphate and dimethylallyl diphosphate into geranylgeranyl diphosphate (GGDP) and successively converting GGDP into fusicocca-2,10(14)-diene, a precursor for fusicoccin H. The second step is the oxidation at the C-8 position by the cytochrome P450 monooxygenase PaP450-2 to yield fusicocca-2,10(14)-diene-8-beta-ol. The cytochrome P450 monooxygenase PaP450-1 then catalyzes the hydroxylation at the C-16 position to produce fusicocca-2,10(14)-diene-8-beta,16-diol. The dioxygenase fc-dox then catalyzes the 16-oxydation of fusicocca-2,10(14)-diene-8-beta,16-diol to yield an aldehyde (8-beta-hydroxyfusicocca-1,10(14)-dien-16-al). The short-chain dehydrogenase/reductase fc-sdr catalyzes the reduction of the aldehyde to yield fusicocca-1,10(14)-diene-8-beta,16-diol. The next step is the hydroxylation at C-9 performed by the cytochrome P450 monooxygenase PaP450-3 that leads to fusicoccin H aglycon which is glycosylated to fusicoccin H by the O-glycosyltransferase PaGT. Hydroxylation at C-12 by the cytochrome P450 monooxygenase PaP450-4 leads then to the production of fusicoccin Q and is followed by methylation by the O-methyltransferase PaMT to yield fusicoccin P. Fusicoccin P is further converted to fusicoccin J via prenylation by the O-glucose prenyltransferase PaPT. Cytochrome P450 monooxygenase PaP450-5 then performs hydroxylation at C-19 to yield dideacetyl-fusicoccin A which is acetylated to 3'-O-deacetyl-fusicoccin A by the O-acetyltransferase PaAT-2. Finally, a another acetylation by the O-acetyltransferase PaAT-1 yields fusicoccin A. The sequence is that of Dideacetyl fusicoccin A C-19 hydroxylase from Phomopsis amygdali (Fusicoccum amygdali).